The sequence spans 251 residues: Triosephosphate isomerase (251 aa).

Position 9 to 11 (9 to 11) interacts with substrate; that stretch reads NWK. The active-site Electrophile is the His95. Glu167 functions as the Proton acceptor in the catalytic mechanism. Residues Gly173, Ser212, and 233–234 contribute to the substrate site; that span reads GG.

Belongs to the triosephosphate isomerase family. As to quaternary structure, homodimer.

The protein localises to the cytoplasm. The enzyme catalyses D-glyceraldehyde 3-phosphate = dihydroxyacetone phosphate. Its pathway is carbohydrate biosynthesis; gluconeogenesis. It functions in the pathway carbohydrate degradation; glycolysis; D-glyceraldehyde 3-phosphate from glycerone phosphate: step 1/1. In terms of biological role, involved in the gluconeogenesis. Catalyzes stereospecifically the conversion of dihydroxyacetone phosphate (DHAP) to D-glyceraldehyde-3-phosphate (G3P). The protein is Triosephosphate isomerase of Vibrio sp. (strain ANT-300).